The chain runs to 505 residues: Membrane-bound O-acyltransferase GUP1 (505 aa).

Topologically, residues 1–217 (MFKAAMDASN…VAPIPLTDYN (217 aa)) are extracellular. Residues 218 to 238 (FVNYMAYITYAPLFIAGPIIT) form a helical membrane-spanning segment. At 239–266 (FNDYIYQSDYKAMSSVKDYKRTFIYFLR) the chain is on the cytoplasmic side. Residues 267–287 (FAFCILVMEFLLHFMYVVAVS) traverse the membrane as a helical segment. Topologically, residues 288–296 (KTKAWEGDT) are extracellular. The helical transmembrane segment at 297-317 (PFQLSMLGLFNLNIIWLKLLI) threads the bilayer. Residues 318–377 (PWRLFRLWSLIDGIDPPENMIRCMDNNFSTLAFWRAWHRSYNRWIIRYIYIPLGGGGKYR) are Cytoplasmic-facing. The next 2 helical transmembrane spans lie at 378–398 (ILNS…ELKL) and 399–419 (LMWG…TAIF). His-392 is a catalytic residue. Residues 420 to 430 (KNYQHEPWYRH) are Cytoplasmic-facing. A helical transmembrane segment spans residues 431–451 (VCALGAVINIWMMMLANLFGF). Residues 452–464 (CMGKDGTMSLIKT) lie on the Extracellular side of the membrane. Residues 465–485 (LFTTAVGLRFLFLSLGALFVG) form a helical membrane-spanning segment. Residues 486-505 (SQVMFELREAEKRRGVNVKC) lie on the Cytoplasmic side of the membrane.

This sequence belongs to the membrane-bound acyltransferase family.

The protein localises to the cell membrane. The protein resides in the endoplasmic reticulum membrane. Its subcellular location is the mitochondrion membrane. Functionally, membrane-bound O-acyltransferase involved in the remodeling of glycosylphosphatidylinositol (GPI) anchors. Acts only on GPI-anchored proteins, but not on free GPI lipids. Also involved in lipid metabolism, having profound effects on sphingolipid-sterol-ordered domains integrity and assembly. Involved in cell integrity and apoptosis. This chain is Membrane-bound O-acyltransferase GUP1 (GUP1), found in Millerozyma farinosa (Yeast).